The following is a 648-amino-acid chain: Chaperone protein HtpG (648 aa).

Residues 1 to 349 (MTTEHAAGAQ…SSDLPLNVSR (349 aa)) are a; substrate-binding. The interval 350–570 (EILQESKDID…EHDVGMNLAR (221 aa)) is b. The interval 571 to 648 (ILKAAGQQAP…MAMGGSAGTD (78 aa)) is c.

This sequence belongs to the heat shock protein 90 family. In terms of assembly, homodimer.

The protein localises to the cytoplasm. Molecular chaperone. Has ATPase activity. This Aromatoleum aromaticum (strain DSM 19018 / LMG 30748 / EbN1) (Azoarcus sp. (strain EbN1)) protein is Chaperone protein HtpG.